A 355-amino-acid polypeptide reads, in one-letter code: Peptide chain release factor 1 (355 aa).

Position 231 is an N5-methylglutamine (Gln231).

It belongs to the prokaryotic/mitochondrial release factor family. Post-translationally, methylated by PrmC. Methylation increases the termination efficiency of RF1.

It is found in the cytoplasm. Its function is as follows. Peptide chain release factor 1 directs the termination of translation in response to the peptide chain termination codons UAG and UAA. The protein is Peptide chain release factor 1 of Erythrobacter litoralis (strain HTCC2594).